The sequence spans 386 residues: Bifunctional desaturase/conjugase FADX (386 aa).

Residues 1-28 form a disordered region; sequence MGAGGRMSVAPNNSKCEKKESRSVKRVP. 2 helical membrane passes run 65 to 85 and 87 to 107; these read LSFIFYSIATTYFHLLPSPIT and IAWPVYWAFQGCILTSVWVLG. Positions 108-112 match the Histidine box-1 motif; it reads HECGH. The short motif at 144-148 is the Histidine box-2 element; that stretch reads HRRHH. The next 3 membrane-spanning stretches (helical) occupy residues 182–202, 228–248, and 250–270; these read ALTLVATLFIGWPLYLAFNVS, IYISDAMIFVAAYVLYKIAMA, and GLAWLVCIYGVPLLIVNALVV. Positions 318 to 322 match the Histidine box-3 motif; sequence HVIHH.

Belongs to the fatty acid desaturase type 1 family. In terms of tissue distribution, expressed exclusively in developing seeds.

The protein localises to the endoplasmic reticulum membrane. It carries out the reaction a (9Z,12Z)-octadecadienoyl-containing glycerolipid + 2 Fe(II)-[cytochrome b5] + O2 + 2 H(+) = a (9Z,11E,13E)-octadecatrienoyl-containing glycerolipid + 2 Fe(III)-[cytochrome b5] + 2 H2O. The catalysed reaction is (9Z,12Z,15Z)-octadecatrienoyl-containing glycerolipid + 2 Fe(II)-[cytochrome b5] + O2 + 2 H(+) = a (9Z,11E,13E,15Z)-octadecatetraenoyl-containing glycerolipid + 2 Fe(III)-[cytochrome b5] + 2 H2O. The enzyme catalyses a (9Z)-octadecenoyl-containing glycerolipid + 2 Fe(II)-[cytochrome b5] + O2 + 2 H(+) = a (9Z,12E)-octadecadienoyl-containing glycerolipid + 2 Fe(III)-[cytochrome b5] + 2 H2O. It catalyses the reaction a (9Z)-hexadecenoyl-containing glycerolipid + 2 Fe(II)-[cytochrome b5] + O2 + 2 H(+) = a (9Z,12E)-hexadecadienoyl-containing glycerolipid + 2 Fe(III)-[cytochrome b5] + 2 H2O. It participates in lipid metabolism; polyunsaturated fatty acid biosynthesis. Functionally, converts linoleic acid to alpha-eleostearic acid (18:3(9Z,11E,13E)) and alpha-linolenic acid to alpha-parinaric acid (18:4(9Z,11E,13E,15Z)). Converts a single cis double bond at carbon 12 to two conjugated trans bonds at positions 11 and 13. Can also act as a 12(E) desaturase when acting on the monounsaturated fatty acids oleate and palmitoleate, stereoselectively introducing a trans double bond. The sequence is that of Bifunctional desaturase/conjugase FADX from Vernicia fordii (Tung).